We begin with the raw amino-acid sequence, 160 residues long: S-adenosylmethionine decarboxylase proenzyme (160 aa).

Ser73 (schiff-base intermediate with substrate; via pyruvic acid) is an active-site residue. Ser73 is subject to Pyruvic acid (Ser); by autocatalysis. Residue His78 is the Proton acceptor; for processing activity of the active site. Cys93 functions as the Proton donor; for catalytic activity in the catalytic mechanism.

It belongs to the prokaryotic AdoMetDC family. Type 1 subfamily. In terms of assembly, heterotetramer of two alpha and two beta chains arranged as a dimer of alpha/beta heterodimers. The cofactor is pyruvate. In terms of processing, is synthesized initially as an inactive proenzyme. Formation of the active enzyme involves a self-maturation process in which the active site pyruvoyl group is generated from an internal serine residue via an autocatalytic post-translational modification. Two non-identical subunits are generated from the proenzyme in this reaction, and the pyruvate is formed at the N-terminus of the alpha chain, which is derived from the carboxyl end of the proenzyme. The post-translation cleavage follows an unusual pathway, termed non-hydrolytic serinolysis, in which the side chain hydroxyl group of the serine supplies its oxygen atom to form the C-terminus of the beta chain, while the remainder of the serine residue undergoes an oxidative deamination to produce ammonia and the pyruvoyl group blocking the N-terminus of the alpha chain.

The enzyme catalyses S-adenosyl-L-methionine + H(+) = S-adenosyl 3-(methylsulfanyl)propylamine + CO2. Its pathway is amine and polyamine biosynthesis; S-adenosylmethioninamine biosynthesis; S-adenosylmethioninamine from S-adenosyl-L-methionine: step 1/1. Its function is as follows. Catalyzes the decarboxylation of S-adenosylmethionine to S-adenosylmethioninamine (dcAdoMet), the propylamine donor required for the synthesis of the polyamines spermine and spermidine from the diamine putrescine. In Pseudomonas aeruginosa (strain LESB58), this protein is S-adenosylmethionine decarboxylase proenzyme.